The sequence spans 266 residues: Cell division protein FtsQ (266 aa).

The Cytoplasmic portion of the chain corresponds to 1–31; it reads MRQKTSSNKKKQKNTNNISLRRKLGLMYKKA. A helical membrane pass occupies residues 32-52; the sequence is ILGLKIVLMIFVCLFVFTKYF. At 53 to 266 the chain is on the periplasmic side; that stretch reads TSIKTYLITN…DRNKYYIQKY (214 aa). The 69-residue stretch at 72–140 folds into the POTRA domain; that stretch reads FRLENVIIEG…NTVYIKLFER (69 aa).

Belongs to the FtsQ/DivIB family. FtsQ subfamily.

The protein localises to the cell inner membrane. Its function is as follows. Essential cell division protein. This is Cell division protein FtsQ from Rickettsia typhi (strain ATCC VR-144 / Wilmington).